The primary structure comprises 250 residues: MFLLLIILQALAVAIAQSQGDHKIIGGYRCVRNSQPWQVALQAGPGHRFLCGGVLLSDQWVITAAHCARPILHVALGKHNIRRWEATQQVVRVARQVPHPQYQPQAHDNDLMLLKLQKKVRLGRAVKTISVASSCASPGTPCRVSGWGTIASPIARYPTALQCVNVNIMSEQACHRAYPGIITSGMVCAGVPEGGKDSCQGDSGGPLVCGGQLQGLVSWGMERCAMPGYPGVYANLCNYHSWIQRTMQSN.

The signal sequence occupies residues 1–18 (MFLLLIILQALAVAIAQS). Positions 19 to 23 (QGDHK) are cleaved as a propeptide — activation peptide. In terms of domain architecture, Peptidase S1 spans 24–248 (IIGGYRCVRN…YHSWIQRTMQ (225 aa)). The cysteines at positions 51 and 67 are disulfide-linked. Active-site charge relay system residues include His66 and Asp110. Disulfide bonds link Cys142–Cys209, Cys174–Cys188, and Cys199–Cys224. The Charge relay system role is filled by Ser203.

Belongs to the peptidase S1 family. Kallikrein subfamily. In terms of processing, proteolytic cleavage of the activation peptide produces the active enzyme.

The protein localises to the secreted. It localises to the extracellular space. Inhibited by SERPINA1, SERPINC1, SERPINE1, SERPINF2, aprotinin, soybean, trypsin inhibitor and leupeptin. Inhibited by serine protease inhibitor SPINK5. Has an autoproteolytic activity which may have a regulatory effect. Activated by citrate and inhibited by zinc and to a lower extent by manganese. Its function is as follows. Serine-type endopeptidase with a dual trypsin-like and chymotrypsin-like substrate specificity. May activate/inactivate the proteinase-activated receptors F2R, F2RL1 and F2RL3 and other kallikreins including KLK1, KLK3, KLK5 and KLK11. May function in seminal clot liquefaction through direct cleavage of the semenogelin SEMG1 and SEMG2 and activation of KLK3. May function through desmoglein DSG1 cleavage in epidermal desquamation a process by which the most superficial corneocytes are shed from the skin surface. May be involved in several aspects of tumor progression including growth, invasion and angiogenesis. This chain is Kallikrein-14 (Klk14), found in Mus musculus (Mouse).